The primary structure comprises 538 residues: Phospho-2-dehydro-3-deoxyheptonate aldolase 1, chloroplastic (538 aa).

The transit peptide at 1–74 (MALSSTSTTN…KPSKSSPPAA (74 aa)) directs the protein to the chloroplast. A disordered region spans residues 55-82 (DSNKIPIVSDKPSKSSPPAATATTAPAP). A compositionally biased stretch (low complexity) spans 68–82 (KSSPPAATATTAPAP). Blocked amino end (Thr) is present on Thr75.

It belongs to the class-II DAHP synthase family.

It is found in the plastid. The protein localises to the chloroplast. The catalysed reaction is D-erythrose 4-phosphate + phosphoenolpyruvate + H2O = 7-phospho-2-dehydro-3-deoxy-D-arabino-heptonate + phosphate. The protein operates within metabolic intermediate biosynthesis; chorismate biosynthesis; chorismate from D-erythrose 4-phosphate and phosphoenolpyruvate: step 1/7. With respect to regulation, activation by tryptophan (a hysteretic factor). The polypeptide is Phospho-2-dehydro-3-deoxyheptonate aldolase 1, chloroplastic (SHKA) (Solanum tuberosum (Potato)).